The sequence spans 70 residues: Translation initiation factor IF-1 (70 aa).

One can recognise an S1-like domain in the interval 1 to 70; sequence MKETNLSIKG…LTKGRIIYRH (70 aa).

It belongs to the IF-1 family. In terms of assembly, component of the 30S ribosomal translation pre-initiation complex which assembles on the 30S ribosome in the order IF-2 and IF-3, IF-1 and N-formylmethionyl-tRNA(fMet); mRNA recruitment can occur at any time during PIC assembly.

The protein resides in the cytoplasm. Functionally, one of the essential components for the initiation of protein synthesis. Stabilizes the binding of IF-2 and IF-3 on the 30S subunit to which N-formylmethionyl-tRNA(fMet) subsequently binds. Helps modulate mRNA selection, yielding the 30S pre-initiation complex (PIC). Upon addition of the 50S ribosomal subunit IF-1, IF-2 and IF-3 are released leaving the mature 70S translation initiation complex. This is Translation initiation factor IF-1 from Mycoplasmoides gallisepticum (strain R(low / passage 15 / clone 2)) (Mycoplasma gallisepticum).